The primary structure comprises 520 residues: MAILDSAGVTTVTENGGGEFVDLDRLRRRKSRSDSSNGLLLSGSDNNSPSDDVGAPADVRDRIDSVVNDDAQGTANLAGDNNGGGDNNGGGRGGGEGRGNADATFTYRPSVPAHRRARESPLSSDAIFKQSHAGLFNLCVVVLIAVNSRLIIENLMKYGWLIRTDFWFSSRSLRDWPLFMCCISLSIFPLAAFTVEKLVLQKYISEPVVIFLHIIITMTEVLYPVYVTLRCDSAFLSGVTLMLLTCIVWLKLVSYAHTSYDIRSLANAADKANPEVSYYVSLKSLAYFMVAPTLCYQPSYPRSACIRKGWVARQFAKLVIFTGFMGFIIEQYINPIVRNSKHPLKGDLLYAIERVLKLSVPNLYVWLCMFYCFFHLWLNILAELLCFGDREFYKDWWNAKSVGDYWRMWNMPVHKWMVRHIYFPCLRSKIPKTLAIIIAFLVSAVFHELCIAVPCRLFKLWAFLGIMFQVPLVFITNYLQERFGSTVGNMIFWFIFCIFGQPMCVLLYYHDLMNRKGSMS.

Disordered stretches follow at residues 28 to 57 and 72 to 116; these read RRKS…GAPA and QGTA…AHRR. Low complexity predominate over residues 34 to 54; that stretch reads DSSNGLLLSGSDNNSPSDDVG. Over residues 81 to 98 the composition is skewed to gly residues; it reads NNGGGDNNGGGRGGGEGR. 7 helical membrane passes run 126–146, 176–196, 207–227, 233–253, 276–296, 317–337, and 365–385; these read AIFK…LIAV, WPLF…FTVE, PVVI…PVYV, SAFL…LKLV, VSYY…TLCY, KLVI…NPIV, and VWLC…AELL. The FYXDWWN motif signature appears at 392 to 398; sequence FYKDWWN. The next 3 membrane-spanning stretches (helical) occupy residues 434–454, 457–477, and 487–507; these read LAII…IAVP, LFKL…FITN, and VGNM…CVLL. Residue His-447 is part of the active site.

Belongs to the membrane-bound acyltransferase family. Sterol o-acyltransferase subfamily. Interacts with LPCAT2 and LPAT2. As to expression, ubiquitous. Highest expression in young developing seeds.

It localises to the plastid. The protein resides in the chloroplast membrane. Its subcellular location is the endoplasmic reticulum membrane. It carries out the reaction an acyl-CoA + a 1,2-diacyl-sn-glycerol = a triacyl-sn-glycerol + CoA. It catalyses the reaction 1,2-di-(9Z-octadecenoyl)-sn-glycerol + (9Z)-octadecenoyl-CoA = 1,2,3-tri-(9Z-octadecenoyl)-glycerol + CoA. Its pathway is glycerolipid metabolism; triacylglycerol biosynthesis. With respect to regulation, partially inhibited by niacin. In terms of biological role, major contributor to triacylglycerol (TAG) synthesis and oil accumulation in seeds. Catalyzes the acylation of the sn-3 hydroxy group of sn-1,2-diacylglycerol using acyl-CoA. Can use palmitoyl-CoA and oleoyl-CoA as substrates. Can use oleoyl-CoA and linoleoyl-CoA as substrates. Has substrate preference for oleoyl-CoA compared to linoleoyl-CoA. Has complementary functions with PDAT1 that are essential for triacylglycerol synthesis and normal development of both seeds and pollen. This is Diacylglycerol O-acyltransferase 1 from Arabidopsis thaliana (Mouse-ear cress).